The chain runs to 182 residues: Small heat shock protein hspG1 (182 aa).

The region spanning 43 to 182 (IKRIDIIPSM…SNSSFKININ (140 aa)) is the sHSP domain.

This sequence belongs to the small heat shock protein (HSP20) family.

This is Small heat shock protein hspG1 (hspG1) from Dictyostelium discoideum (Social amoeba).